Consider the following 239-residue polypeptide: Ribonuclease 3 (239 aa).

The 126-residue stretch at Arg-12–Gly-137 folds into the RNase III domain. Glu-50 provides a ligand contact to Mg(2+). Asp-54 is a catalytic residue. The Mg(2+) site is built by Asp-123 and Glu-126. Glu-126 is an active-site residue. The 70-residue stretch at Asp-162–Ile-231 folds into the DRBM domain.

The protein belongs to the ribonuclease III family. In terms of assembly, homodimer. Requires Mg(2+) as cofactor.

It is found in the cytoplasm. It carries out the reaction Endonucleolytic cleavage to 5'-phosphomonoester.. In terms of biological role, digests double-stranded RNA. Involved in the processing of primary rRNA transcript to yield the immediate precursors to the large and small rRNAs (23S and 16S). Processes some mRNAs, and tRNAs when they are encoded in the rRNA operon. Processes pre-crRNA and tracrRNA of type II CRISPR loci if present in the organism. The sequence is that of Ribonuclease 3 from Rhizobium etli (strain CIAT 652).